The chain runs to 60 residues: UPF0434 protein Ssed_2824 (60 aa).

This sequence belongs to the UPF0434 family.

This chain is UPF0434 protein Ssed_2824, found in Shewanella sediminis (strain HAW-EB3).